Consider the following 459-residue polypeptide: Bifunctional protein GlmU (459 aa).

Residues 1–230 are pyrophosphorylase; the sequence is MSNRFAVILA…FDETLGVNDR (230 aa). Residues 9-12, lysine 23, glutamine 73, and 78-79 contribute to the UDP-N-acetyl-alpha-D-glucosamine site; these read LAAG and GT. Aspartate 103 is a binding site for Mg(2+). The UDP-N-acetyl-alpha-D-glucosamine site is built by glycine 140, glutamate 155, asparagine 170, and asparagine 228. Asparagine 228 is a Mg(2+) binding site. The tract at residues 231–251 is linker; sequence VALSQAEIIMKNRINRKNMVN. The N-acetyltransferase stretch occupies residues 252-459; that stretch reads GVTIIDPSNT…VDQLLNKKKS (208 aa). Residues arginine 333 and lysine 351 each coordinate UDP-N-acetyl-alpha-D-glucosamine. The active-site Proton acceptor is the histidine 363. The UDP-N-acetyl-alpha-D-glucosamine site is built by tyrosine 366 and asparagine 377. Acetyl-CoA contacts are provided by residues 386 to 387, alanine 423, and arginine 440; that span reads NY.

This sequence in the N-terminal section; belongs to the N-acetylglucosamine-1-phosphate uridyltransferase family. It in the C-terminal section; belongs to the transferase hexapeptide repeat family. In terms of assembly, homotrimer. Requires Mg(2+) as cofactor.

It is found in the cytoplasm. It carries out the reaction alpha-D-glucosamine 1-phosphate + acetyl-CoA = N-acetyl-alpha-D-glucosamine 1-phosphate + CoA + H(+). It catalyses the reaction N-acetyl-alpha-D-glucosamine 1-phosphate + UTP + H(+) = UDP-N-acetyl-alpha-D-glucosamine + diphosphate. It participates in nucleotide-sugar biosynthesis; UDP-N-acetyl-alpha-D-glucosamine biosynthesis; N-acetyl-alpha-D-glucosamine 1-phosphate from alpha-D-glucosamine 6-phosphate (route II): step 2/2. It functions in the pathway nucleotide-sugar biosynthesis; UDP-N-acetyl-alpha-D-glucosamine biosynthesis; UDP-N-acetyl-alpha-D-glucosamine from N-acetyl-alpha-D-glucosamine 1-phosphate: step 1/1. Its pathway is bacterial outer membrane biogenesis; LPS lipid A biosynthesis. Catalyzes the last two sequential reactions in the de novo biosynthetic pathway for UDP-N-acetylglucosamine (UDP-GlcNAc). The C-terminal domain catalyzes the transfer of acetyl group from acetyl coenzyme A to glucosamine-1-phosphate (GlcN-1-P) to produce N-acetylglucosamine-1-phosphate (GlcNAc-1-P), which is converted into UDP-GlcNAc by the transfer of uridine 5-monophosphate (from uridine 5-triphosphate), a reaction catalyzed by the N-terminal domain. This is Bifunctional protein GlmU from Bacillus thuringiensis subsp. konkukian (strain 97-27).